The following is a 151-amino-acid chain: 3-hydroxyacyl-[acyl-carrier-protein] dehydratase FabZ (151 aa).

H54 is a catalytic residue.

Belongs to the thioester dehydratase family. FabZ subfamily. As to quaternary structure, oligomer. The N-terminus is blocked.

It localises to the cytoplasm. The enzyme catalyses a (3R)-hydroxyacyl-[ACP] = a (2E)-enoyl-[ACP] + H2O. Its function is as follows. Involved in unsaturated fatty acids biosynthesis. Catalyzes the dehydration of short chain beta-hydroxyacyl-ACPs and long chain saturated and unsaturated beta-hydroxyacyl-ACPs. This chain is 3-hydroxyacyl-[acyl-carrier-protein] dehydratase FabZ, found in Escherichia coli O9:H4 (strain HS).